The sequence spans 437 residues: GTPase Der (437 aa).

EngA-type G domains lie at Pro-4–Ala-167 and Ile-176–Arg-352. Residues Gly-10 to Ser-17, Asp-57 to Ile-61, Asn-119 to Asp-122, Gly-182 to Ser-189, Asp-230 to Met-234, and Asn-295 to Asp-298 contribute to the GTP site. Residues Lys-353–Lys-437 enclose the KH-like domain.

The protein belongs to the TRAFAC class TrmE-Era-EngA-EngB-Septin-like GTPase superfamily. EngA (Der) GTPase family. Associates with the 50S ribosomal subunit.

In terms of biological role, GTPase that plays an essential role in the late steps of ribosome biogenesis. This chain is GTPase Der, found in Leuconostoc citreum (strain KM20).